A 116-amino-acid polypeptide reads, in one-letter code: uncharacterized protein (116 aa).

A disordered region spans residues 77–116 (SATSHYPKADDPQRFARSVSRGPSRVRRPARNSASRPVRR).

This is an uncharacterized protein from Frog virus 3 (isolate Goorha) (FV-3).